We begin with the raw amino-acid sequence, 419 residues long: G protein-activated inward rectifier potassium channel 4 (419 aa).

Residues 1-24 (MAGDSRNAMNQDMEIGVTPRDPKK) are disordered. Residues 1-86 (MAGDSRNAMN…LFTTLVDLKW (86 aa)) lie on the Cytoplasmic side of the membrane. Serine 5 carries the phosphoserine modification. A helical membrane pass occupies residues 87 to 111 (RFNLLVFTMVYTITWLFFGFIWWLI). Residues 112-135 (AYIRGDLDHVGDREWIPCVENLSG) lie on the Extracellular side of the membrane. The helical; Pore-forming intramembrane region spans 136–147 (FVSAFLFSIETE). The segment at residues 148–154 (TTIGYGF) is an intramembrane region (pore-forming). The Selectivity filter motif lies at 149–154 (TIGYGF). Over 155–163 (RVITEKCPE) the chain is Extracellular. A helical transmembrane segment spans residues 164-185 (GIVLLLVQAILGSIVNAFMVGC). Over 186 to 419 (MFVKISQPKK…SGSQETKDSA (234 aa)) the chain is Cytoplasmic. Positions 381–419 (PSPPLPGGCVGAELGAEAEQEGEEEPEGLSGSQETKDSA) are disordered. Acidic residues predominate over residues 396 to 407 (AEAEQEGEEEPE).

It belongs to the inward rectifier-type potassium channel (TC 1.A.2.1) family. KCNJ5 subfamily. As to quaternary structure, associates with KCNJ3/GIRK1 or KCNJ6/GIRK2 to form a G-protein-activated heteromultimer pore-forming unit. The resulting inward current is much larger.

Its subcellular location is the membrane. It carries out the reaction K(+)(in) = K(+)(out). With respect to regulation, heteromultimer composed of KCNJ3/GIRK1 and KCNJ5/GIRK4 is activated by phosphatidylinositol 4,5 biphosphate (PtdIns(4,5)P2). In terms of biological role, inward rectifier potassium channels are characterized by a greater tendency to allow potassium to flow into the cell rather than out of it. Their voltage dependence is regulated by the concentration of extracellular potassium; as external potassium is raised, the voltage range of the channel opening shifts to more positive voltages. The inward rectification is mainly due to the blockage of outward current by internal magnesium. This receptor plays a crucial role in regulating the heartbeat. Can be blocked by external barium. This potassium channel is controlled by G proteins. This Bos taurus (Bovine) protein is G protein-activated inward rectifier potassium channel 4 (KCNJ5).